Reading from the N-terminus, the 460-residue chain is Cysteine--tRNA ligase (460 aa).

Residue Cys-28 coordinates Zn(2+). The 'HIGH' region motif lies at 30–40 (MTVYDYCHLGH). Zn(2+)-binding residues include Cys-209, His-234, and Glu-238. The 'KMSKS' region signature appears at 266 to 270 (KMSKS). Residue Lys-269 participates in ATP binding.

The protein belongs to the class-I aminoacyl-tRNA synthetase family. As to quaternary structure, monomer. Zn(2+) is required as a cofactor.

It localises to the cytoplasm. It catalyses the reaction tRNA(Cys) + L-cysteine + ATP = L-cysteinyl-tRNA(Cys) + AMP + diphosphate. The protein is Cysteine--tRNA ligase of Pseudomonas syringae pv. tomato (strain ATCC BAA-871 / DC3000).